Consider the following 498-residue polypeptide: Calcium-dependent protein kinase 22 (498 aa).

G2 carries the N-myristoyl glycine lipid modification. Residues 36 to 305 (YSFGDELGKG…AADVLEHPWM (270 aa)) form the Protein kinase domain. ATP is bound by residues 42 to 50 (LGKGNFGTT) and K65. Residue D164 is the Proton acceptor of the active site. The residue at position 204 (S204) is a Phosphoserine. An autoinhibitory domain region spans residues 309-339 (APDKPIDNVVLSRMKQFRAMNKLKKLALKVI). EF-hand domains are found at residues 346–381 (EEIK…HGSK), 382–417 (LSET…RHRL), 418–453 (ERDE…HGMG), and 454–488 (DEAN…GILQ). The Ca(2+) site is built by D359, D361, S363, S365, E370, D395, D397, N399, T401, E406, D431, D433, S435, H437, E442, D466, N468, D470, K472, and E477.

Belongs to the protein kinase superfamily. Ser/Thr protein kinase family. CDPK subfamily.

Its subcellular location is the membrane. The catalysed reaction is L-seryl-[protein] + ATP = O-phospho-L-seryl-[protein] + ADP + H(+). It catalyses the reaction L-threonyl-[protein] + ATP = O-phospho-L-threonyl-[protein] + ADP + H(+). Its activity is regulated as follows. Activated by calcium. Autophosphorylation may play an important role in the regulation of the kinase activity. In terms of biological role, may play a role in signal transduction pathways that involve calcium as a second messenger. The chain is Calcium-dependent protein kinase 22 (CPK22) from Arabidopsis thaliana (Mouse-ear cress).